Reading from the N-terminus, the 329-residue chain is Fructose-1,6-bisphosphatase class 1 (329 aa).

4 residues coordinate Mg(2+): glutamate 84, aspartate 103, leucine 105, and aspartate 106. Residues 106 to 109 (DGSS), asparagine 196, and lysine 262 contribute to the substrate site. Mg(2+) is bound at residue glutamate 268.

This sequence belongs to the FBPase class 1 family. In terms of assembly, homotetramer. The cofactor is Mg(2+).

The protein localises to the cytoplasm. The enzyme catalyses beta-D-fructose 1,6-bisphosphate + H2O = beta-D-fructose 6-phosphate + phosphate. It participates in carbohydrate biosynthesis; gluconeogenesis. The sequence is that of Fructose-1,6-bisphosphatase class 1 from Shewanella pealeana (strain ATCC 700345 / ANG-SQ1).